A 722-amino-acid chain; its full sequence is Bifunctional UDP-N-acetylglucosamine 2-epimerase/N-acetylmannosamine kinase (722 aa).

Positions 19, 23, 113, 220, and 253 each coordinate UDP. CMP-N-acetyl-beta-neuraminate contacts are provided by Lys-259, Glu-271, Lys-280, and His-281. The UDP site is built by Val-282, Ser-301, Ser-302, Glu-307, and Arg-321. The segment at 406–722 is N-acetylmannosamine kinase; it reads TLSALAVDLG…VLDYTTRRIH (317 aa). Residue Asp-413 coordinates Mg(2+). Gly-416 contributes to the an N-acyl-D-mannosamine 6-phosphate binding site. Thr-417, Asn-418, and Arg-420 together coordinate ADP. An N-acyl-D-mannosamine 6-phosphate-binding residues include Gly-476, Arg-477, Thr-489, Asn-516, Asp-517, and Gly-545. An N-acyl-D-mannosamine-binding residues include Gly-476, Arg-477, Thr-489, Asn-516, and Asp-517. Residue Asp-517 is part of the active site. An N-acyl-D-mannosamine contacts are provided by Glu-566 and His-569. His-569 lines the an N-acyl-D-mannosamine 6-phosphate pocket. 4 residues coordinate Zn(2+): His-569, Cys-579, Cys-581, and Cys-586. Glu-588 serves as a coordination point for an N-acyl-D-mannosamine 6-phosphate. Glu-588 lines the an N-acyl-D-mannosamine pocket.

This sequence in the N-terminal section; belongs to the UDP-N-acetylglucosamine 2-epimerase family. It in the C-terminal section; belongs to the ROK (NagC/XylR) family. As to quaternary structure, homodimer. Homotetramer. Homohexamer. The hexameric form exhibits both enzyme activities, whereas the dimeric form only catalyzes the phosphorylation of N-acyl-D-mannosamine. In terms of processing, phosphorylated. Phosphorylation by PKC activates the UDP-N-acetylglucosamine 2-epimerase activity. Widely expressed. Highest expression is observed in liver.

It is found in the cytoplasm. The protein resides in the cytosol. The catalysed reaction is UDP-N-acetyl-alpha-D-glucosamine + H2O = aldehydo-N-acetyl-D-mannosamine + UDP + H(+). It catalyses the reaction an N-acyl-D-mannosamine + ATP = an N-acyl-D-mannosamine 6-phosphate + ADP + H(+). It participates in amino-sugar metabolism; N-acetylneuraminate biosynthesis. Its activity is regulated as follows. The UDP-N-acetylglucosamine 2-epimerase activity, in contrast to the N-acetylmannosamine kinase activity, exhibits allosteric regulation by cytidine monophosphate-N-acetylneuraminic acid (CMP-Neu5Ac), the end product of neuraminic acid biosynthesis. Moreover, the activity is contingent upon the oligomeric state of the enzyme. The monomeric form is inactive, while the dimeric form selectively catalyzes the phosphorylation of N-acetylmannosamine. The hexameric form, on the other hand, demonstrates full proficiency in both enzyme activities. Furthermore, the UDP-N-acetylglucosamine 2-epimerase activity is increased by PKC-mediated phosphorylation. Functionally, bifunctional enzyme that possesses both UDP-N-acetylglucosamine 2-epimerase and N-acetylmannosamine kinase activities, and serves as the initiator of the biosynthetic pathway leading to the production of N-acetylneuraminic acid (NeuAc), a critical precursor in the synthesis of sialic acids. By catalyzing this pivotal and rate-limiting step in sialic acid biosynthesis, this enzyme assumes a pivotal role in governing the regulation of cell surface sialylation. Sialic acids represent a category of negatively charged sugars that reside on the surface of cells as terminal components of glycoconjugates and mediate important functions in various cellular processes, including cell adhesion, signal transduction, and cellular recognition. In Rattus norvegicus (Rat), this protein is Bifunctional UDP-N-acetylglucosamine 2-epimerase/N-acetylmannosamine kinase.